We begin with the raw amino-acid sequence, 2605 residues long: Protein ABERRANT POLLEN TRANSMISSION 1 (2605 aa).

The signal sequence occupies residues methionine 1–alanine 43. A disordered region spans residues serine 137–glycine 158. Residues asparagine 232, asparagine 320, asparagine 348, asparagine 516, asparagine 587, asparagine 628, asparagine 696, asparagine 779, asparagine 1171, asparagine 1318, and asparagine 1459 are each glycosylated (N-linked (GlcNAc...) asparagine). Residues serine 305–serine 326 are disordered. Basic and acidic residues predominate over residues glutamate 311–serine 326. Positions methionine 1761–glycine 1818 are disordered. The span at serine 1768–glutamine 1781 shows a compositional bias: low complexity. Polar residues predominate over residues isoleucine 1782 to serine 1812. Asparagine 1791, asparagine 1810, asparagine 2003, asparagine 2280, and asparagine 2291 each carry an N-linked (GlcNAc...) asparagine glycan. Disordered regions lie at residues valine 2269–aspartate 2312 and glutamate 2332–lysine 2361. The span at threonine 2281–alanine 2300 shows a compositional bias: polar residues. Composition is skewed to basic and acidic residues over residues proline 2303 to aspartate 2312 and aspartate 2343 to lysine 2361. 2 N-linked (GlcNAc...) asparagine glycosylation sites follow: asparagine 2468 and asparagine 2564. The tract at residues threonine 2574–aspartate 2605 is disordered.

It belongs to the SABRE family. Mature pollen-specific.

Its subcellular location is the secreted. It localises to the golgi apparatus. Functionally, may be involved in membrane trafficking. Required for tip growth in pollen tubes and root hairs. The protein is Protein ABERRANT POLLEN TRANSMISSION 1 of Zea mays (Maize).